The sequence spans 205 residues: Holliday junction branch migration complex subunit RuvA (205 aa).

The domain I stretch occupies residues 1 to 64 (MIGKLKGILE…EEAIRLFGFV (64 aa)). The tract at residues 65-143 (AKAEQEWFCL…PFNDNALHFT (79 aa)) is domain II. The flexible linker stretch occupies residues 144–149 (PQPHLE). The domain III stretch occupies residues 150 to 205 (VTHQPTNDALSALVKLGFERDQAARALALAMNALEGETVSSALLIRHSLKLLSPST).

Belongs to the RuvA family. In terms of assembly, homotetramer. Forms an RuvA(8)-RuvB(12)-Holliday junction (HJ) complex. HJ DNA is sandwiched between 2 RuvA tetramers; dsDNA enters through RuvA and exits via RuvB. An RuvB hexamer assembles on each DNA strand where it exits the tetramer. Each RuvB hexamer is contacted by two RuvA subunits (via domain III) on 2 adjacent RuvB subunits; this complex drives branch migration. In the full resolvosome a probable DNA-RuvA(4)-RuvB(12)-RuvC(2) complex forms which resolves the HJ.

The protein resides in the cytoplasm. Its function is as follows. The RuvA-RuvB-RuvC complex processes Holliday junction (HJ) DNA during genetic recombination and DNA repair, while the RuvA-RuvB complex plays an important role in the rescue of blocked DNA replication forks via replication fork reversal (RFR). RuvA specifically binds to HJ cruciform DNA, conferring on it an open structure. The RuvB hexamer acts as an ATP-dependent pump, pulling dsDNA into and through the RuvAB complex. HJ branch migration allows RuvC to scan DNA until it finds its consensus sequence, where it cleaves and resolves the cruciform DNA. The polypeptide is Holliday junction branch migration complex subunit RuvA (Bartonella quintana (strain Toulouse) (Rochalimaea quintana)).